A 342-amino-acid chain; its full sequence is uncharacterized protein (342 aa).

This sequence belongs to the proline racemase family.

This is an uncharacterized protein from Brucella canis (strain ATCC 23365 / NCTC 10854 / RM-666).